Here is a 265-residue protein sequence, read N- to C-terminus: ATP synthase subunit a (265 aa).

A run of 6 helical transmembrane segments spans residues 26 to 46 (VHLDTLFFSLVSGVLFLFFFY), 88 to 108 (IGSLALTIFCWVFIMNAIDLI), 132 to 152 (DISATLGMSVCVFALIIFYTI), 168 to 188 (PFNHWAFIPVNFLLEAVTLLA), 195 to 217 (FRLFGNMYAGELIFVLIAVMYMA), and 231 to 251 (LIWAIFHILVITLQAFIFMML).

It belongs to the ATPase A chain family. As to quaternary structure, F-type ATPases have 2 components, CF(1) - the catalytic core - and CF(0) - the membrane proton channel. CF(1) has five subunits: alpha(3), beta(3), gamma(1), delta(1), epsilon(1). CF(0) has three main subunits: a(1), b(2) and c(9-12). The alpha and beta chains form an alternating ring which encloses part of the gamma chain. CF(1) is attached to CF(0) by a central stalk formed by the gamma and epsilon chains, while a peripheral stalk is formed by the delta and b chains.

The protein resides in the cell inner membrane. Its function is as follows. Key component of the proton channel; it plays a direct role in the translocation of protons across the membrane. This Histophilus somni (strain 2336) (Haemophilus somnus) protein is ATP synthase subunit a.